The sequence spans 367 residues: Alanine racemase (367 aa).

Catalysis depends on Lys40, which acts as the Proton acceptor; specific for D-alanine. Lys40 carries the N6-(pyridoxal phosphate)lysine modification. A substrate-binding site is contributed by Arg136. The Proton acceptor; specific for L-alanine role is filled by Tyr263. Met310 serves as a coordination point for substrate.

It belongs to the alanine racemase family. It depends on pyridoxal 5'-phosphate as a cofactor.

The enzyme catalyses L-alanine = D-alanine. Its pathway is amino-acid biosynthesis; D-alanine biosynthesis; D-alanine from L-alanine: step 1/1. Its function is as follows. Catalyzes the interconversion of L-alanine and D-alanine. May also act on other amino acids. The polypeptide is Alanine racemase (alr) (Streptococcus pneumoniae (strain Taiwan19F-14)).